A 51-amino-acid polypeptide reads, in one-letter code: Cytochrome b559 subunit beta (51 aa).

Residues 26–42 (WLAVHALTVPTIFFLGA) traverse the membrane as a helical segment. Residue H30 coordinates heme.

Belongs to the PsbE/PsbF family. In terms of assembly, heterodimer of an alpha subunit and a beta subunit. PSII is composed of 1 copy each of membrane proteins PsbA, PsbB, PsbC, PsbD, PsbE, PsbF, PsbH, PsbI, PsbJ, PsbK, PsbL, PsbM, PsbT, PsbX, Psb30/Ycf12, peripheral proteins PsbO, CyanoQ (PsbQ), PsbU, PsbV and a large number of cofactors. It forms dimeric complexes. Heme b is required as a cofactor.

The protein resides in the cell inner membrane. Its function is as follows. This b-type cytochrome is tightly associated with the reaction center of photosystem II (PSII). PSII is a light-driven water:plastoquinone oxidoreductase that uses light energy to abstract electrons from H(2)O, generating O(2) and a proton gradient subsequently used for ATP formation. It consists of a core antenna complex that captures photons, and an electron transfer chain that converts photonic excitation into a charge separation. The protein is Cytochrome b559 subunit beta of Gloeobacter violaceus (strain ATCC 29082 / PCC 7421).